The chain runs to 508 residues: Photosystem II CP47 reaction center protein (508 aa).

The next 6 helical transmembrane spans lie at 21-36 (SVHI…WAGS), 101-115 (IMFS…IWHW), 140-156 (GIHL…FGAF), 203-218 (IAAG…FHLS), 237-252 (VLSS…AFVV), and 457-472 (SFAL…HGAR).

It belongs to the PsbB/PsbC family. PsbB subfamily. As to quaternary structure, PSII is composed of 1 copy each of membrane proteins PsbA, PsbB, PsbC, PsbD, PsbE, PsbF, PsbH, PsbI, PsbJ, PsbK, PsbL, PsbM, PsbT, PsbX, PsbY, PsbZ, Psb30/Ycf12, at least 3 peripheral proteins of the oxygen-evolving complex and a large number of cofactors. It forms dimeric complexes. The cofactor is Binds multiple chlorophylls. PSII binds additional chlorophylls, carotenoids and specific lipids..

The protein localises to the plastid. It localises to the chloroplast thylakoid membrane. Its function is as follows. One of the components of the core complex of photosystem II (PSII). It binds chlorophyll and helps catalyze the primary light-induced photochemical processes of PSII. PSII is a light-driven water:plastoquinone oxidoreductase, using light energy to abstract electrons from H(2)O, generating O(2) and a proton gradient subsequently used for ATP formation. The chain is Photosystem II CP47 reaction center protein from Guizotia abyssinica (Niger).